The chain runs to 325 residues: Tetraacyldisaccharide 4'-kinase (325 aa).

55-62 (TAGGNGKT) provides a ligand contact to ATP.

The protein belongs to the LpxK family.

It carries out the reaction a lipid A disaccharide + ATP = a lipid IVA + ADP + H(+). It participates in glycolipid biosynthesis; lipid IV(A) biosynthesis; lipid IV(A) from (3R)-3-hydroxytetradecanoyl-[acyl-carrier-protein] and UDP-N-acetyl-alpha-D-glucosamine: step 6/6. Its function is as follows. Transfers the gamma-phosphate of ATP to the 4'-position of a tetraacyldisaccharide 1-phosphate intermediate (termed DS-1-P) to form tetraacyldisaccharide 1,4'-bis-phosphate (lipid IVA). The chain is Tetraacyldisaccharide 4'-kinase from Salmonella heidelberg (strain SL476).